The following is a 341-amino-acid chain: Aspartate--ammonia ligase (341 aa).

This sequence belongs to the class-II aminoacyl-tRNA synthetase family. AsnA subfamily.

The protein resides in the cytoplasm. It carries out the reaction L-aspartate + NH4(+) + ATP = L-asparagine + AMP + diphosphate + H(+). The protein operates within amino-acid biosynthesis; L-asparagine biosynthesis; L-asparagine from L-aspartate (ammonia route): step 1/1. This is Aspartate--ammonia ligase from Clostridium tetani (strain Massachusetts / E88).